The chain runs to 135 residues: Probable transcription factor At2g20613 (135 aa).

The interval 1 to 104 (MSHKRFNPLT…KRGGGGGEEA (104 aa)) is disordered. Over residues 28–41 (DSSSDEETDSDSDS) the composition is skewed to acidic residues. A compositionally biased stretch (basic and acidic residues) spans 62-80 (KSVKISEKSVAKRSRETHE).

It belongs to the GeBP family.

The protein is Probable transcription factor At2g20613 of Arabidopsis thaliana (Mouse-ear cress).